The following is a 216-amino-acid chain: MGPRNPSPDHLSESESEEEENISYLNESSGEEWDSSEEEDSMVPNLSPLESLAWQVKCLLKYSTTWKPLNPNSWLYHAKLLDPSTPVHILREIGLRLSHCSHCVPKLEPIPEWPPLASCGVPPFQKPLTSPSRLSRDHATLNGALQFATKQLSRTLSRATPIPEYLKQIPNSCVSGCCCGWLTKTVKETTRTEPINTTYSYTDFQKAVNKLLTASL.

The tract at residues 1-42 is disordered; it reads MGPRNPSPDHLSESESEEEENISYLNESSGEEWDSSEEEDSM. Over residues 29-41 the composition is skewed to acidic residues; sequence SGEEWDSSEEEDS. Lys-61 bears the N6-acetyllysine mark.

In terms of assembly, interacts with DDB1 and CUL4A.

The protein resides in the nucleus. It functions in the pathway protein modification; protein ubiquitination. Its function is as follows. Functions as a substrate recognition component for CUL4-DDB1 E3 ubiquitin-protein ligase complex, which mediates ubiquitination and proteasome-dependent degradation of nuclear proteins. The chain is DDB1- and CUL4-associated factor 16 from Homo sapiens (Human).